Reading from the N-terminus, the 408-residue chain is 2-acyl-4-prenylphloroglucinol 6-prenyltransferase, chloroplastic (408 aa).

Residues 1–46 constitute a chloroplast transit peptide; the sequence is MELSSACNLSLKPNYYYYPTSLFPSNNSYNNLKASSYYQTQRPIKC. 9 helical membrane passes run 119–139, 146–166, 193–213, 217–237, 257–277, 281–301, 326–346, 355–375, and 388–408; these read PIPF…ELLK, WQLM…HIYI, SVKS…LLMI, CGLF…MYSV, IGIG…GLPF, PPFT…SILK, IVLV…GVAI, YIMI…TWLL, and YYHF…FIST.

It belongs to the UbiA prenyltransferase family. Homo- and heteromer. Interacts with PT1L, forming a functional metabolon. Mg(2+) is required as a cofactor. In terms of tissue distribution, expressed in trichomes.

The protein resides in the plastid. It is found in the chloroplast membrane. It catalyses the reaction a 2-acyl-4-prenylphloroglucinol + dimethylallyl diphosphate = a 2-acyl-4,6-diprenylphloroglucinol + diphosphate. The enzyme catalyses a 2-acyl-4,6-diprenylphloroglucinol + dimethylallyl diphosphate = a 2-acyl-4,6,6-triprenylphloroglucinol + diphosphate. Its pathway is secondary metabolite biosynthesis. In terms of biological role, involved in the biosynthesis of prenylated phenolics natural products which contribute to the bitter taste of beer and display broad biological activities. Catalyzes the two last prenylation steps in the beta-bitter acid pathway. Uses dimethylallyl diphosphate (DMAPP) as the prenyl donor. The sequence is that of 2-acyl-4-prenylphloroglucinol 6-prenyltransferase, chloroplastic from Humulus lupulus (European hop).